Here is a 377-residue protein sequence, read N- to C-terminus: 4-hydroxy-3-methylbut-2-en-1-yl diphosphate synthase (flavodoxin) (377 aa).

[4Fe-4S] cluster-binding residues include C272, C275, C307, and E314.

Belongs to the IspG family. [4Fe-4S] cluster serves as cofactor.

The catalysed reaction is (2E)-4-hydroxy-3-methylbut-2-enyl diphosphate + oxidized [flavodoxin] + H2O + 2 H(+) = 2-C-methyl-D-erythritol 2,4-cyclic diphosphate + reduced [flavodoxin]. It participates in isoprenoid biosynthesis; isopentenyl diphosphate biosynthesis via DXP pathway; isopentenyl diphosphate from 1-deoxy-D-xylulose 5-phosphate: step 5/6. In terms of biological role, converts 2C-methyl-D-erythritol 2,4-cyclodiphosphate (ME-2,4cPP) into 1-hydroxy-2-methyl-2-(E)-butenyl 4-diphosphate. This is 4-hydroxy-3-methylbut-2-en-1-yl diphosphate synthase (flavodoxin) from Zymomonas mobilis subsp. mobilis (strain ATCC 31821 / ZM4 / CP4).